The chain runs to 634 residues: Nicotinic receptor-associated protein 1 (634 aa).

C2 domains are found at residues 1 to 141 (MNQP…KAHL) and 159 to 295 (KTGS…EILL). Residues Leu29, Asp30, Asp36, Asp105, Asp107, Asp119, Asp189, Asp195, Asp251, Asp253, and Asp271 each coordinate Ca(2+). Positions 338 to 557 (DFAVAVDFTA…LDPDVIQENL (220 aa)) constitute a VWFA domain. The segment at 576–603 (RGFQPRPVDDPWRRDSPPPEFDPILDGT) is disordered. Residues 582-592 (PVDDPWRRDSP) show a composition bias toward basic and acidic residues.

This sequence belongs to the copine family. In terms of assembly, interacts with nicotinic acetylcholine receptor. It depends on Ca(2+) as a cofactor. As to expression, expressed in head and tail neurons, ventral cord moto-neurons, body wall muscles and hypodermal cells of the vulva.

Its subcellular location is the cell membrane. Exhibits calcium-dependent phospholipid binding properties. May function in membrane trafficking. Regulates synaptic levels of nicotinic acetylcholine receptor subunit lev-1 and unc-38 in the nerve cord. Involved in nicotinic acetylcholine receptor (nAChR)-mediated sensitivity to nicotine and levamisole. Affects directional sperm motility. The polypeptide is Nicotinic receptor-associated protein 1 (nra-1) (Caenorhabditis elegans).